We begin with the raw amino-acid sequence, 379 residues long: Protein RecA (379 aa).

79–86 contacts ATP; that stretch reads GPESSGKT.

This sequence belongs to the RecA family.

Its subcellular location is the cytoplasm. In terms of biological role, can catalyze the hydrolysis of ATP in the presence of single-stranded DNA, the ATP-dependent uptake of single-stranded DNA by duplex DNA, and the ATP-dependent hybridization of homologous single-stranded DNAs. It interacts with LexA causing its activation and leading to its autocatalytic cleavage. The polypeptide is Protein RecA (Streptococcus agalactiae).